We begin with the raw amino-acid sequence, 463 residues long: Glutamate--tRNA ligase (463 aa).

Residues 9–19 (PSPTGYLHVGG) carry the 'HIGH' region motif. Positions 115-129 (AGEKPRYDGTWRPEA) are enriched in basic and acidic residues. The tract at residues 115–136 (AGEKPRYDGTWRPEAGKTLPAI) is disordered. The short motif at 241–245 (KLSKR) is the 'KMSKS' region element. Lys-244 is an ATP binding site.

This sequence belongs to the class-I aminoacyl-tRNA synthetase family. Glutamate--tRNA ligase type 1 subfamily. In terms of assembly, monomer.

The protein localises to the cytoplasm. It catalyses the reaction tRNA(Glu) + L-glutamate + ATP = L-glutamyl-tRNA(Glu) + AMP + diphosphate. Catalyzes the attachment of glutamate to tRNA(Glu) in a two-step reaction: glutamate is first activated by ATP to form Glu-AMP and then transferred to the acceptor end of tRNA(Glu). This Janthinobacterium sp. (strain Marseille) (Minibacterium massiliensis) protein is Glutamate--tRNA ligase.